The sequence spans 260 residues: Dof zinc finger protein DOF1.2 (260 aa).

The Dof-type zinc finger occupies 38 to 92 (PACPRCASSNTKFCYYNNYSLSQPRYFCKGCRRYWTKGGSLRNIPVGGGCRKRSR). Residues C40, C43, C65, and C68 each contribute to the Zn(2+) site. Residues 83–124 (VGGGCRKRSRSRQNSHKRFGRNENRPDGLINQDDGFQSSPPG) form a disordered region. A compositionally biased stretch (basic residues) spans 87 to 101 (CRKRSRSRQNSHKRF).

It localises to the nucleus. Transcription factor that binds specifically to a 5'-AA[AG]G-3' consensus core sequence. This chain is Dof zinc finger protein DOF1.2 (DOF1.2), found in Arabidopsis thaliana (Mouse-ear cress).